Consider the following 421-residue polypeptide: Cyclin-A1 (421 aa).

Residues 1-20 (MRRHSSKSGVALPPVGQGPD) form a disordered region.

The protein belongs to the cyclin family. Cyclin AB subfamily. As to quaternary structure, interacts with the CDK2 and the CDC2 protein kinases to form a serine/threonine kinase holoenzyme complex. The cyclin subunit imparts substrate specificity to the complex. Does not bind CDK4 and CDK5 (in vitro). The cyclin A1-CDK2 complex interacts with transcription factor E2F-1 and RB proteins. Found in a complex with CDK2, CABLES1 and CCNE1. Interacts with INCA1 and KLHDC9. Polyubiquitinated via 'Lys-11'-linked ubiquitin by the anaphase-promoting complex (APC/C), leading to its degradation by the proteasome. Deubiquitinated and stabilized by USP37 enables entry into S phase. Ubiquitinated during the G1 phase by the SCF(FBXO31) complex, leading to its proteasomal degradation.

The protein localises to the nucleus. Its function is as follows. May be involved in the control of the cell cycle at the G1/S (start) and G2/M (mitosis) transitions. May primarily function in the control of the germline meiotic cell cycle and additionally in the control of mitotic cell cycle in some somatic cells. In Rattus norvegicus (Rat), this protein is Cyclin-A1 (Ccna1).